The chain runs to 122 residues: Large ribosomal subunit protein uL14 (122 aa).

Belongs to the universal ribosomal protein uL14 family. In terms of assembly, part of the 50S ribosomal subunit. Forms a cluster with proteins L3 and L19. In the 70S ribosome, L14 and L19 interact and together make contacts with the 16S rRNA in bridges B5 and B8.

Functionally, binds to 23S rRNA. Forms part of two intersubunit bridges in the 70S ribosome. This chain is Large ribosomal subunit protein uL14, found in Synechococcus sp. (strain JA-3-3Ab) (Cyanobacteria bacterium Yellowstone A-Prime).